The primary structure comprises 179 residues: Large ribosomal subunit protein uL5 (179 aa).

The protein belongs to the universal ribosomal protein uL5 family. In terms of assembly, part of the 50S ribosomal subunit; part of the 5S rRNA/L5/L18/L25 subcomplex. Contacts the 5S rRNA and the P site tRNA. Forms a bridge to the 30S subunit in the 70S ribosome.

In terms of biological role, this is one of the proteins that bind and probably mediate the attachment of the 5S RNA into the large ribosomal subunit, where it forms part of the central protuberance. In the 70S ribosome it contacts protein S13 of the 30S subunit (bridge B1b), connecting the 2 subunits; this bridge is implicated in subunit movement. Contacts the P site tRNA; the 5S rRNA and some of its associated proteins might help stabilize positioning of ribosome-bound tRNAs. This chain is Large ribosomal subunit protein uL5, found in Xylella fastidiosa (strain M12).